Reading from the N-terminus, the 212-residue chain is Phosphoribosyl-dephospho-CoA transferase (212 aa).

Active-site residues include aspartate 139 and aspartate 141.

Belongs to the MdcG family.

It catalyses the reaction apo-[malonate decarboxylase ACP] + 2'-(5''-triphospho-alpha-D-ribosyl)-3'-dephospho-CoA = holo-[malonate decarboxylase ACP] + diphosphate. Transfers 2'-(5-triphosphoribosyl)-3'-dephosphocoenzyme-A to the apo-[acyl-carrier-protein] of the malonate decarboxylase to yield holo-[acyl-carrier-protein]. The chain is Phosphoribosyl-dephospho-CoA transferase from Azotobacter vinelandii (strain DJ / ATCC BAA-1303).